A 237-amino-acid chain; its full sequence is Phosphoribosylaminoimidazole-succinocarboxamide synthase (237 aa).

It belongs to the SAICAR synthetase family.

The enzyme catalyses 5-amino-1-(5-phospho-D-ribosyl)imidazole-4-carboxylate + L-aspartate + ATP = (2S)-2-[5-amino-1-(5-phospho-beta-D-ribosyl)imidazole-4-carboxamido]succinate + ADP + phosphate + 2 H(+). It participates in purine metabolism; IMP biosynthesis via de novo pathway; 5-amino-1-(5-phospho-D-ribosyl)imidazole-4-carboxamide from 5-amino-1-(5-phospho-D-ribosyl)imidazole-4-carboxylate: step 1/2. This Shigella sonnei (strain Ss046) protein is Phosphoribosylaminoimidazole-succinocarboxamide synthase.